The chain runs to 377 residues: Phospho-N-acetylmuramoyl-pentapeptide-transferase (377 aa).

The next 11 membrane-spanning stretches (helical) occupy residues Tyr9–Gly29, Met62–Ile82, Phe85–Tyr105, Phe122–Ala142, Trp155–Phe175, Val178–Thr198, Gly210–Val230, Ala247–Phe267, Val274–Ile294, Ile299–Val319, and Gln354–Leu374.

This sequence belongs to the glycosyltransferase 4 family. MraY subfamily. The cofactor is Mg(2+).

It localises to the cell inner membrane. It carries out the reaction UDP-N-acetyl-alpha-D-muramoyl-L-alanyl-gamma-D-glutamyl-meso-2,6-diaminopimeloyl-D-alanyl-D-alanine + di-trans,octa-cis-undecaprenyl phosphate = di-trans,octa-cis-undecaprenyl diphospho-N-acetyl-alpha-D-muramoyl-L-alanyl-D-glutamyl-meso-2,6-diaminopimeloyl-D-alanyl-D-alanine + UMP. Its pathway is cell wall biogenesis; peptidoglycan biosynthesis. Catalyzes the initial step of the lipid cycle reactions in the biosynthesis of the cell wall peptidoglycan: transfers peptidoglycan precursor phospho-MurNAc-pentapeptide from UDP-MurNAc-pentapeptide onto the lipid carrier undecaprenyl phosphate, yielding undecaprenyl-pyrophosphoryl-MurNAc-pentapeptide, known as lipid I. This is Phospho-N-acetylmuramoyl-pentapeptide-transferase from Bordetella parapertussis (strain 12822 / ATCC BAA-587 / NCTC 13253).